A 221-amino-acid chain; its full sequence is MIIAIDGPSASGKSSIARELGVKLGYKFISSGYLYRIITLIAQKFLMSSCDFISEDRLLNLILENDISFNDSSFFLNGENVESQILNDKIDFQVSFYSSYVGIRNIVNKKLREVVKFSNDNYIIEGRDITTIVFPESEFKIYLDASVKVRALRRYKQRNGNETLEELERTLKIRDDVDKRKQYGKLKLSKGVFYLDTSYKGLDDVCNIIIEKFNLKKVRER.

7–15 (GPSASGKSS) is an ATP binding site.

Belongs to the cytidylate kinase family. Type 1 subfamily.

It localises to the cytoplasm. It catalyses the reaction CMP + ATP = CDP + ADP. The enzyme catalyses dCMP + ATP = dCDP + ADP. The polypeptide is Cytidylate kinase 1 (Borrelia garinii subsp. bavariensis (strain ATCC BAA-2496 / DSM 23469 / PBi) (Borreliella bavariensis)).